A 397-amino-acid polypeptide reads, in one-letter code: Putative efflux system protein YvrP (397 aa).

The chain crosses the membrane as a helical span at residues 8–28; that stretch reads LIGGAICAGVLVLAGIGAGGF. Positions 106 to 183 form a coiled coil; the sequence is EDHSDEVEQA…KELAGLTKNK (78 aa).

This sequence belongs to the membrane fusion protein (MFP) (TC 8.A.1) family.

It is found in the cell membrane. This Bacillus subtilis (strain 168) protein is Putative efflux system protein YvrP (yvrP).